The chain runs to 195 residues: FMN-dependent NADH:quinone oxidoreductase (195 aa).

Residues S10, 16–18 (SQS), and 91–94 (MYNF) contribute to the FMN site.

Belongs to the azoreductase type 1 family. Homodimer. Requires FMN as cofactor.

The enzyme catalyses 2 a quinone + NADH + H(+) = 2 a 1,4-benzosemiquinone + NAD(+). It catalyses the reaction N,N-dimethyl-1,4-phenylenediamine + anthranilate + 2 NAD(+) = 2-(4-dimethylaminophenyl)diazenylbenzoate + 2 NADH + 2 H(+). In terms of biological role, quinone reductase that provides resistance to thiol-specific stress caused by electrophilic quinones. Its function is as follows. Also exhibits azoreductase activity. Catalyzes the reductive cleavage of the azo bond in aromatic azo compounds to the corresponding amines. The protein is FMN-dependent NADH:quinone oxidoreductase of Aeromonas salmonicida (strain A449).